A 302-amino-acid polypeptide reads, in one-letter code: Recombination-associated protein RdgC (302 aa).

The protein belongs to the RdgC family.

Its subcellular location is the cytoplasm. It is found in the nucleoid. May be involved in recombination. The protein is Recombination-associated protein RdgC of Actinobacillus pleuropneumoniae serotype 5b (strain L20).